The chain runs to 888 residues: Valine--tRNA ligase (888 aa).

The 'HIGH' region motif lies at 43–53 (PFTSGTLHLGH). A 'KMSKS' region motif is present at residues 534–538 (KMSKS). Lys537 serves as a coordination point for ATP.

This sequence belongs to the class-I aminoacyl-tRNA synthetase family. ValS type 2 subfamily.

The protein resides in the cytoplasm. It carries out the reaction tRNA(Val) + L-valine + ATP = L-valyl-tRNA(Val) + AMP + diphosphate. Functionally, catalyzes the attachment of valine to tRNA(Val). As ValRS can inadvertently accommodate and process structurally similar amino acids such as threonine, to avoid such errors, it has a 'posttransfer' editing activity that hydrolyzes mischarged Thr-tRNA(Val) in a tRNA-dependent manner. The polypeptide is Valine--tRNA ligase (Thermococcus kodakarensis (strain ATCC BAA-918 / JCM 12380 / KOD1) (Pyrococcus kodakaraensis (strain KOD1))).